We begin with the raw amino-acid sequence, 270 residues long: MDFLVLIKYILLGLLQGFTEPIPVSSSGHLVLAQHFLGLNIEGFSFELLMNAGSLIAVLLVYKNDIFRLAVNGLSYVTTKNEKGKADFRFIIYLIIATIPAGVIGVLFDDEISAFFKDGVRITAVTLLITGLALFLIRNLRGRKSDGEIRLRDAVIIGFSQMVALVPGISRSGATIVPAMALGLKSETALRFSFLLYIPVSLGGTILSITDIFHDPRLGELFLPYLFAFIASVIATYFSLRWFMNIMAKGNLVYFSIYCFVIGIAVLIFA.

Transmembrane regions (helical) follow at residues 41 to 61 (IEGF…VLLV), 88 to 108 (FRFI…GVLF), 117 to 137 (KDGV…LFLI), 192 to 212 (FSFL…ITDI), 218 to 238 (LGEL…ATYF), and 250 to 270 (GNLV…LIFA).

It belongs to the UppP family.

It localises to the cell membrane. The enzyme catalyses di-trans,octa-cis-undecaprenyl diphosphate + H2O = di-trans,octa-cis-undecaprenyl phosphate + phosphate + H(+). Its function is as follows. Catalyzes the dephosphorylation of undecaprenyl diphosphate (UPP). Confers resistance to bacitracin. This Bacillus licheniformis (strain ATCC 14580 / DSM 13 / JCM 2505 / CCUG 7422 / NBRC 12200 / NCIMB 9375 / NCTC 10341 / NRRL NRS-1264 / Gibson 46) protein is Undecaprenyl-diphosphatase 1.